The primary structure comprises 166 residues: Short form salivary protein D7R1 (166 aa).

The signal sequence occupies residues 1-21 (MFRKVFSVALVTCGLLVIVQA).

Belongs to the PBP/GOBP family. In terms of assembly, interacts with host coagulation factor XII (F12) (inactive and activated) (via amino acids 1-77). Interacts with host high molecular weight kininogen (KNG1) (via amino acids 402-532). As to expression, female salivary gland (at protein level).

Its subcellular location is the secreted. With respect to regulation, zn(2+) modulates binding to host coagulation factor XII (F12) and high molecular weight kininogen (KNG1). Salivary protein with anticoagulant activity that targets the intrinsic blood coagulation pathway in the host. Inhibits activation of the host plasma contact system by preventing the reciprocal activation of host coagulation factor XII (F12) and prekallikrein (KLKB1). Attenuates generation of bradykinin in host plasma. May bind and sequester different mediators involved in the host response, such as serotonin and histamine. This is Short form salivary protein D7R1 from Anopheles stephensi (Indo-Pakistan malaria mosquito).